The primary structure comprises 412 residues: Inositol polyphosphate-5-phosphatase A (412 aa).

Cys-409 carries the S-farnesyl cysteine lipid modification. The propeptide at 410–412 (VVQ) is removed in mature form.

The protein belongs to the inositol 1,4,5-trisphosphate 5-phosphatase type I family. As to quaternary structure, interacts with TASOR. In terms of processing, isoprenylation at Cys-409 is required for localization at the membrane. In terms of tissue distribution, expressed at high levels in cerebellar Purkinje cells (at protein level). Expressed in Sertoli cells of the testis.

It localises to the cell membrane. Its subcellular location is the cell projection. The protein resides in the dendrite. It carries out the reaction 1D-myo-inositol 1,4,5-trisphosphate + H2O = 1D-myo-inositol 1,4-bisphosphate + phosphate. The catalysed reaction is 1D-myo-inositol 1,3,4,5-tetrakisphosphate + H2O = 1D-myo-inositol 1,3,4-trisphosphate + phosphate. In terms of biological role, phosphatase that specifically hydrolyzes the 5-phosphate of inositol 1,4,5-trisphosphate to inositol 1,4-bisphosphate, and inositol 1,3,4,5-tetrasphosphate to inositol 1,3,4-trisphosphate. Plays a crucial role in the survival of cerebellar Purkinje cells. The chain is Inositol polyphosphate-5-phosphatase A (Inpp5a) from Mus musculus (Mouse).